Consider the following 220-residue polypeptide: LHFPL tetraspan subfamily member 1 protein (220 aa).

A signal peptide spans 1–20; sequence MRSSLTMVGTLWAFLSLVTA. The next 2 helical transmembrane spans lie at 86 to 106 and 122 to 142; these read VVTGAGCALLLLVALAAVLGC and AAQFVGGLLISSGCALYPLGW. N-linked (GlcNAc...) asparagine glycosylation is present at Asn153. A helical transmembrane segment spans residues 165–185; the sequence is LGWAYYCAGGGAAAAMLICTW.

This sequence belongs to the LHFP family. As to expression, widely expressed. Expressed at high levels in lung, thymus, skeletal muscle, colon and ovary.

It localises to the membrane. The chain is LHFPL tetraspan subfamily member 1 protein from Homo sapiens (Human).